We begin with the raw amino-acid sequence, 414 residues long: Protein FAM81B (414 aa).

Positions methionine 1–proline 13 are enriched in polar residues. The disordered stretch occupies residues methionine 1–proline 43. 4 coiled-coil regions span residues asparagine 70–alanine 94, leucine 121–alanine 149, lysine 188–threonine 223, and leucine 266–serine 414.

It belongs to the FAM81 family.

This is Protein FAM81B (FAM81B) from Bos taurus (Bovine).